The sequence spans 256 residues: uncharacterized protein (256 aa).

This sequence belongs to the glycosyltransferase 2 family.

This is an uncharacterized protein from Acanthamoeba polyphaga mimivirus (APMV).